The following is a 292-amino-acid chain: Nitrogenase iron protein 2 (292 aa).

12 to 19 (GKGGIGKS) lines the ATP pocket. Cys-97 contributes to the [4Fe-4S] cluster binding site. Arg-100 carries the ADP-ribosylarginine; by dinitrogenase reductase ADP-ribosyltransferase modification. Cys-133 contacts [4Fe-4S] cluster.

The protein belongs to the NifH/BchL/ChlL family. As to quaternary structure, homodimer. It depends on [4Fe-4S] cluster as a cofactor. Post-translationally, the reversible ADP-ribosylation of Arg-100 inactivates the nitrogenase reductase and regulates nitrogenase activity.

It catalyses the reaction N2 + 8 reduced [2Fe-2S]-[ferredoxin] + 16 ATP + 16 H2O = H2 + 8 oxidized [2Fe-2S]-[ferredoxin] + 2 NH4(+) + 16 ADP + 16 phosphate + 6 H(+). Functionally, the key enzymatic reactions in nitrogen fixation are catalyzed by the nitrogenase complex, which has 2 components: the iron protein and the molybdenum-iron protein. This chain is Nitrogenase iron protein 2 (nifH2), found in Paenibacillus durus (Paenibacillus azotofixans).